Reading from the N-terminus, the 2207-residue chain is Mediator of RNA polymerase II transcription subunit 13-like (2207 aa).

The segment covering 337-355 has biased composition (polar residues); the sequence is VQSAASHLGSQDGGMSTMH. Disordered stretches follow at residues 337-368, 384-403, 431-479, and 519-574; these read VQSA…PKLH, AQSK…AAHS, VGPS…KRPL, and KYDK…VPVN. Positions 356–368 are enriched in basic residues; the sequence is SPKRSRKTPPKLH. The span at 384-394 shows a compositional bias: polar residues; that stretch reads AQSKRSQMSTP. Low complexity predominate over residues 442–453; that stretch reads PGFSAGLPSSSS. Residues 463 to 475 show a composition bias toward basic and acidic residues; the sequence is KTTERQEKGDKLQ. A compositionally biased stretch (polar residues) spans 528 to 539; that stretch reads SRNTSKQMNLNP. Pro residues predominate over residues 546-555; the sequence is PISPLPPTLS. Residues Ser548 and Ser555 each carry the phosphoserine modification. The LXXLL motif 1 signature appears at 664-668; that stretch reads LQRLL. Residues 731-747 are compositionally biased toward basic and acidic residues; it reads GTEKDSLKKNKSEDGFG. Residues 731-767 form a disordered region; sequence GTEKDSLKKNKSEDGFGTKDVTTPGHSTPVPDGKNAM. Phosphoserine occurs at positions 812 and 821. The disordered stretch occupies residues 816-847; sequence ELGAVSPALRSSKMPTVGTEERPPGKDGRAAG. Basic and acidic residues predominate over residues 834–844; the sequence is TEERPPGKDGR. Ser918 is subject to Phosphoserine. The disordered stretch occupies residues 1004–1091; that stretch reads DPDYVNTPQM…STTRPLNSVE (88 aa). Polar residues predominate over residues 1009-1019; sequence NTPQMNTPVTL. Residues 1020-1031 show a composition bias toward low complexity; that stretch reads NSAAPASNSGAG. Residues 1072-1087 are compositionally biased toward polar residues; that stretch reads TDQGSPASTPSTTRPL. Residues 1224–1228 carry the LXXLL motif 2 motif; sequence LLLLL. A leucine-zipper region spans residues 1379 to 1400; it reads LPIPTLLVGYDKEFLTISPFSL. Disordered regions lie at residues 1523–1652 and 2042–2077; these read LMPP…SVTE and GNLH…QGER. The span at 1541-1593 shows a compositional bias: low complexity; it reads PGNAGSLPSNSGSGAPPAGSAFNPTSSSSANPTTSSSSASSGPPGSSAASAPG. Polar residues-rich tracts occupy residues 1612-1624 and 1635-1649; these read QNPS…TDRT and PGQS…GQDS. Ser2080 is modified (phosphoserine).

The protein belongs to the Mediator complex subunit 13 family. In terms of assembly, component of the Mediator complex, which is composed of MED1, MED4, MED6, MED7, MED8, MED9, MED10, MED11, MED12, MED13, MED13L, MED14, MED15, MED16, MED17, MED18, MED19, MED20, MED21, MED22, MED23, MED24, MED25, MED26, MED27, MED29, MED30, MED31, CCNC, CDK8 and CDC2L6/CDK11. The MED12, MED13, CCNC and CDK8 subunits form a distinct module termed the CDK8 module. Mediator containing the CDK8 module is less active than Mediator lacking this module in supporting transcriptional activation. Individual preparations of the Mediator complex lacking one or more distinct subunits have been variously termed ARC, CRSP, DRIP, PC2, SMCC and TRAP. As to expression, highly expressed in heart and weakly expressed in brain, spleen, lung, liver, kidney and testis.

The protein localises to the nucleus. Component of the Mediator complex, a coactivator involved in the regulated transcription of nearly all RNA polymerase II-dependent genes. Mediator functions as a bridge to convey information from gene-specific regulatory proteins to the basal RNA polymerase II transcription machinery. Mediator is recruited to promoters by direct interactions with regulatory proteins and serves as a scaffold for the assembly of a functional preinitiation complex with RNA polymerase II and the general transcription factors. This subunit may specifically regulate transcription of targets of the Wnt signaling pathway and SHH signaling pathway. The chain is Mediator of RNA polymerase II transcription subunit 13-like (Med13l) from Mus musculus (Mouse).